The chain runs to 130 residues: Small ribosomal subunit protein uS8 (130 aa).

It belongs to the universal ribosomal protein uS8 family. In terms of assembly, part of the 30S ribosomal subunit. Contacts proteins S5 and S12.

One of the primary rRNA binding proteins, it binds directly to 16S rRNA central domain where it helps coordinate assembly of the platform of the 30S subunit. The protein is Small ribosomal subunit protein uS8 of Mannheimia succiniciproducens (strain KCTC 0769BP / MBEL55E).